The following is a 404-amino-acid chain: V-set and immunoglobulin domain-containing protein 1 (404 aa).

An N-terminal signal peptide occupies residues 1 to 22; the sequence is MMVFAFWKVFLILNCLAGQVNM. One can recognise an Ig-like V-type domain in the interval 23 to 133; the sequence is VQVTIPDTFV…DFFGKNQGIL (111 aa). Over 23-233 the chain is Extracellular; that stretch reads VQVTIPDTFV…EIDLTSSDPE (211 aa). N39 carries N-linked (GlcNAc...) asparagine glycosylation. 2 disulfide bridges follow: C44–C117 and C162–C212. The Ig-like C2-type domain occupies 141–228; the sequence is PSKPFCSIQG…GNSSCEIDLT (88 aa). N201 and N220 each carry an N-linked (GlcNAc...) asparagine glycan. Residues 234 to 254 form a helical membrane-spanning segment; sequence VGIIIGALVGALTGAAIIICV. The Cytoplasmic portion of the chain corresponds to 255–404; that stretch reads VYFARNKVKS…REEEKETVKA (150 aa). Disordered stretches follow at residues 266-285 and 298-404; these read QKNL…HHSR and EGTL…TVKA. Residues S271 and S272 each carry the phosphoserine modification. The span at 301 to 314 shows a compositional bias: polar residues; the sequence is LPSSIHASHNTEPT. The span at 357-383 shows a compositional bias: acidic residues; that stretch reads MELEPETEPEPEPEPEPQPELESELEP. A compositionally biased stretch (basic and acidic residues) spans 393–404; the sequence is PMREEEKETVKA.

It localises to the membrane. The polypeptide is V-set and immunoglobulin domain-containing protein 1 (Vsig1) (Rattus norvegicus (Rat)).